Reading from the N-terminus, the 260-residue chain is Carbonic anhydrase 3 (260 aa).

N-acetylalanine is present on alanine 2. Residues 3–259 enclose the Alpha-carbonic anhydrase domain; that stretch reads KEWGYASHNG…VKGRVVRASF (257 aa). A phosphoserine mark is found at serine 29, serine 43, serine 48, serine 50, and serine 55. Residues 64-67 are involved in proton transfer; that stretch reads KTCR. The residue at position 73 (threonine 73) is a Phosphothreonine. Residues histidine 94, histidine 96, and histidine 119 each contribute to the Zn(2+) site. Tyrosine 127 carries the phosphotyrosine modification. Phosphothreonine occurs at positions 129 and 176. 2 positions are modified to S-glutathionyl cysteine: cysteine 182 and cysteine 187. Position 198–199 (198–199) interacts with substrate; that stretch reads TT. At threonine 216 the chain carries Phosphothreonine. At serine 219 the chain carries Phosphoserine.

Belongs to the alpha-carbonic anhydrase family. It depends on Zn(2+) as a cofactor. In terms of processing, S-thiolated both by thiol-disulfide exchange with glutathione disulfide and by oxyradical-initiated S-thiolation with reduced glutathione. Post-translationally, S-glutathionylated in hepatocytes under oxidative stress. In terms of tissue distribution, expressed at lower levels in adipose tissue from animals that were either genetically obese or had experimentally induced obesity.

The protein localises to the cytoplasm. It carries out the reaction hydrogencarbonate + H(+) = CO2 + H2O. Its activity is regulated as follows. Inhibited by acetazolamide. Reversible hydration of carbon dioxide. The protein is Carbonic anhydrase 3 of Mus musculus (Mouse).